The primary structure comprises 1255 residues: DNA-directed RNA polymerase subunit beta' (1255 aa).

Positions 60, 62, 77, and 80 each coordinate Zn(2+). Mg(2+)-binding residues include Asp503, Asp505, and Asp507. Zn(2+) is bound by residues Cys875, Cys950, Cys957, and Cys960.

It belongs to the RNA polymerase beta' chain family. The RNAP catalytic core consists of 2 alpha, 1 beta, 1 beta' and 1 omega subunit. When a sigma factor is associated with the core the holoenzyme is formed, which can initiate transcription. The cofactor is Mg(2+). Zn(2+) is required as a cofactor.

The catalysed reaction is RNA(n) + a ribonucleoside 5'-triphosphate = RNA(n+1) + diphosphate. Its function is as follows. DNA-dependent RNA polymerase catalyzes the transcription of DNA into RNA using the four ribonucleoside triphosphates as substrates. This chain is DNA-directed RNA polymerase subunit beta', found in Mycoplasma mycoides subsp. mycoides SC (strain CCUG 32753 / NCTC 10114 / PG1).